The following is a 187-amino-acid chain: Transcriptional repressor NrdR (187 aa).

A zinc finger spans residues 3 to 34 (CPFCRHPDSRVVDSRTTDDGTSIRRRRQCPDC). Residues 46–136 (LMVVKRSGVT…VYRAFDSLED (91 aa)) enclose the ATP-cone domain. Residues 146–187 (EEQRERPAVDDEDHEDAGAERQGTDRGSGGTVEVPVPATVAD) form a disordered region.

This sequence belongs to the NrdR family. Requires Zn(2+) as cofactor.

In terms of biological role, negatively regulates transcription of bacterial ribonucleotide reductase nrd genes and operons by binding to NrdR-boxes. The sequence is that of Transcriptional repressor NrdR from Streptomyces avermitilis (strain ATCC 31267 / DSM 46492 / JCM 5070 / NBRC 14893 / NCIMB 12804 / NRRL 8165 / MA-4680).